The sequence spans 281 residues: NAD kinase (281 aa).

Asp-66 (proton acceptor) is an active-site residue. NAD(+) is bound by residues Asp-66–Gly-67, Asn-137–Asp-138, Arg-148, Arg-165, Asp-167, and Thr-178–Ser-183.

The protein belongs to the NAD kinase family. A divalent metal cation is required as a cofactor.

The protein resides in the cytoplasm. It catalyses the reaction NAD(+) + ATP = ADP + NADP(+) + H(+). Involved in the regulation of the intracellular balance of NAD and NADP, and is a key enzyme in the biosynthesis of NADP. Catalyzes specifically the phosphorylation on 2'-hydroxyl of the adenosine moiety of NAD to yield NADP. This is NAD kinase from Chlorobium phaeovibrioides (strain DSM 265 / 1930) (Prosthecochloris vibrioformis (strain DSM 265)).